Here is a 291-residue protein sequence, read N- to C-terminus: Beta-lactamase CTX-M-1 (291 aa).

The N-terminal stretch at Met1–Ala28 is a signal peptide. Residue Ser73 is the Nucleophile; acyl-ester intermediate of the active site. Positions 76, 133, 169, and 240 each coordinate a beta-lactam. Catalysis depends on Glu169, which acts as the Proton acceptor.

Belongs to the class-A beta-lactamase family. As to quaternary structure, monomer.

It localises to the secreted. The enzyme catalyses a beta-lactam + H2O = a substituted beta-amino acid. Its activity is regulated as follows. Inhibited by the beta-lactamase-blocking agent clavulanic acid; in the TG1 strain. In terms of biological role, extended-spectrum beta-lactamase (ESBL) which confers resistance to penicillins, as well as first, second and third-generation cephalosporins. Has cefotaxime-hydrolyzing activity. Inactive against the cephamycin antibiotic, cefoxitin, or against the carbapenem, imipenem. This Escherichia coli protein is Beta-lactamase CTX-M-1.